Here is a 142-residue protein sequence, read N- to C-terminus: AP-2 complex subunit sigma (142 aa).

Belongs to the adaptor complexes small subunit family. As to quaternary structure, adaptor protein complex 2 (AP-2) is a heterotetramer composed of two large adaptins (alpha-type and beta-type subunits), a medium adaptin (mu-type subunit AP50) and a small adaptin (sigma-type subunit AP17).

Its subcellular location is the cell membrane. The protein resides in the membrane. The protein localises to the coated pit. Functionally, component of the adaptor complexes which link clathrin to receptors in coated vesicles. Clathrin-associated protein complexes are believed to interact with the cytoplasmic tails of membrane proteins, leading to their selection and concentration. This chain is AP-2 complex subunit sigma (ap2s1), found in Dictyostelium discoideum (Social amoeba).